We begin with the raw amino-acid sequence, 354 residues long: Carbonic anhydrase 12 (354 aa).

An N-terminal signal peptide occupies residues 1–24 (MPHRSLRATVVLLLVILKKQPSSS). Over 25–301 (APLNGSKWTY…QGLLTDTGLS (277 aa)) the chain is Extracellular. N28, N42, N80, and N88 each carry an N-linked (GlcNAc...) asparagine glycan. Residues 30–290 (SKWTYVGPAG…FDERLVYISF (261 aa)) enclose the Alpha-carbonic anhydrase domain. An intrachain disulfide couples C50 to C231. The Proton donor/acceptor role is filled by H94. The Zn(2+) site is built by H120, H122, and H146. 227–228 (TT) lines the substrate pocket. Residues 302 to 322 (LGIILSVALAGVLGISIVLAV) form a helical membrane-spanning segment. At 323 to 354 (SIWLFKRKKSKKGDNKGVIYKPAIKKEAEVHA) the chain is on the cytoplasmic side.

It belongs to the alpha-carbonic anhydrase family. In terms of assembly, homodimer. It depends on Zn(2+) as a cofactor.

The protein localises to the membrane. It localises to the cell membrane. The enzyme catalyses hydrogencarbonate + H(+) = CO2 + H2O. With respect to regulation, inhibited by acetazolamide. In terms of biological role, reversible hydration of carbon dioxide. The protein is Carbonic anhydrase 12 of Mus musculus (Mouse).